Reading from the N-terminus, the 218-residue chain is Peroxiredoxin-like 2A (218 aa).

The thioredoxin fold stretch occupies residues 3-101; that stretch reads MWSIGAGAIG…DELGVPLYAV (99 aa). Catalysis depends on redox-active residues C74 and C77.

Belongs to the peroxiredoxin-like PRXL2 family. PRXL2A subfamily.

It localises to the cytoplasm. The protein localises to the secreted. Involved in redox regulation of the cell. Acts as an antioxidant. Inhibits TNFSF11-induced NFKB1 and JUN activation and osteoclast differentiation. May affect bone resorption and help to maintain bone mass. Acts as a negative regulator of macrophage-mediated inflammation by inhibiting macrophage production of inflammatory cytokines, probably through suppression of the MAPK signaling pathway. In Bos taurus (Bovine), this protein is Peroxiredoxin-like 2A (PRXL2A).